The chain runs to 111 residues: Large ribosomal subunit protein uL22 (111 aa).

Belongs to the universal ribosomal protein uL22 family. As to quaternary structure, part of the 50S ribosomal subunit.

In terms of biological role, this protein binds specifically to 23S rRNA; its binding is stimulated by other ribosomal proteins, e.g. L4, L17, and L20. It is important during the early stages of 50S assembly. It makes multiple contacts with different domains of the 23S rRNA in the assembled 50S subunit and ribosome. The globular domain of the protein is located near the polypeptide exit tunnel on the outside of the subunit, while an extended beta-hairpin is found that lines the wall of the exit tunnel in the center of the 70S ribosome. In Francisella philomiragia subsp. philomiragia (strain ATCC 25017 / CCUG 19701 / FSC 153 / O#319-036), this protein is Large ribosomal subunit protein uL22.